Reading from the N-terminus, the 913-residue chain is Trafficking kinesin-binding protein 2 (913 aa).

The segment covering 11-21 (SQTGEENLMSS) has biased composition (polar residues). The disordered stretch occupies residues 11-31 (SQTGEENLMSSNHRDSESITD). The HAP1 N-terminal domain occupies 48–353 (EEQLPQYKLR…QEEIKELRNK (306 aa)). Positions 134-355 (QALLKRNHVL…EIKELRNKAG (222 aa)) form a coiled coil. Residues 359–507 (HLCFSQAYGV…KQFFAEEWER (149 aa)) are interaction with HGS. Residues 442–478 (ESGVQQTEDKTLPNQGSSTEVPGNSHPRDPPGLPEDS) are disordered. Polar residues predominate over residues 453–463 (LPNQGSSTEVP). A coiled-coil region spans residues 502-519 (AEEWERKLQILAEQEEEV). Composition is skewed to low complexity over residues 688 to 704 (SSGF…GSAS) and 780 to 789 (PSQSPCSSPV). Disordered regions lie at residues 688-707 (SSGF…SNTA) and 769-790 (ALAT…SPVP).

Belongs to the milton family. Interacts with RHOT1/Miro-1 and RHOT2/Miro-2. Interacts with GABA-A receptor and O-GlcNAc transferase. Interacts with HGS. In terms of processing, O-glycosylated. Present in heart and brain (at protein level).

Its subcellular location is the cytoplasm. The protein resides in the early endosome. It is found in the mitochondrion. Functionally, may regulate endosome-to-lysosome trafficking of membrane cargo, including EGFR. The chain is Trafficking kinesin-binding protein 2 (Trak2) from Rattus norvegicus (Rat).